Reading from the N-terminus, the 504-residue chain is Maturase K (504 aa).

The protein belongs to the intron maturase 2 family. MatK subfamily.

The protein resides in the plastid. It is found in the chloroplast. Usually encoded in the trnK tRNA gene intron. Probably assists in splicing its own and other chloroplast group II introns. The chain is Maturase K from Barbarea vulgaris (Yellow rocket).